The sequence spans 354 residues: Guanine nucleotide-binding protein G(q) subunit alpha (354 aa).

S-palmitoyl cysteine attachment occurs at residues cysteine 3 and cysteine 4. One can recognise a G-alpha domain in the interval 32 to 354 (RELKLLLLGT…QLNLKEYNLV (323 aa)). Residues 35–48 (KLLLLGTGESGKST) form a G1 motif region. GTP contacts are provided by residues 40–47 (GTGESGKS), 174–180 (LRVRVPT), 199–203 (DVGGQ), 269–272 (NKKD), and alanine 326. 2 residues coordinate Mg(2+): serine 47 and threonine 180. Residues 172-180 (DILRVRVPT) form a G2 motif region. Residues 195 to 204 (FRMVDVGGQR) form a G3 motif region. The G4 motif stretch occupies residues 265-272 (ILFLNKKD). The tract at residues 324–329 (TCATDT) is G5 motif.

The protein belongs to the G-alpha family. G(q) subfamily. In terms of assembly, g proteins are composed of 3 units; alpha, beta and gamma. The alpha chain contains the guanine nucleotide binding site. In terms of tissue distribution, a high concentration was found in the retinal light-sensitive outer segment.

Guanine nucleotide-binding proteins (G proteins) are involved as modulators or transducers in various transmembrane signaling systems. Functionally, the G(q) alpha subunit is involved in the light-dependent activation of phospholipase C. The sequence is that of Guanine nucleotide-binding protein G(q) subunit alpha from Loligo forbesii (Veined squid).